The chain runs to 112 residues: Citrate synthase (112 aa).

Catalysis depends on residues His-39 and Asp-97.

This sequence belongs to the citrate synthase family.

The enzyme catalyses oxaloacetate + acetyl-CoA + H2O = citrate + CoA + H(+). It participates in carbohydrate metabolism; tricarboxylic acid cycle; isocitrate from oxaloacetate: step 1/2. The protein is Citrate synthase (gltA) of Bartonella vinsonii subsp. berkhoffii.